A 257-amino-acid polypeptide reads, in one-letter code: Chymotrypsin-like elastase family member 3B (257 aa).

The segment at residues Val-1–Ala-2 is a signal peptide (or 3). A propeptide spans Ser-3–Arg-15 (activation peptide). In terms of domain architecture, Peptidase S1 spans Val-16 to Ala-255. N-linked (GlcNAc...) asparagine glycosylation occurs at Asn-38. 2 cysteine pairs are disulfide-bonded: Cys-45–Cys-61 and Cys-104–Cys-107. His-60 functions as the Charge relay system in the catalytic mechanism. Asp-110 functions as the Charge relay system in the catalytic mechanism. Disulfide bonds link Cys-144-Cys-210, Cys-175-Cys-191, and Cys-200-Cys-231. Ser-204 (charge relay system) is an active-site residue.

It belongs to the peptidase S1 family. Elastase subfamily.

It carries out the reaction Preferential cleavage: Ala-|-Xaa. Does not hydrolyze elastin.. Its function is as follows. Efficient protease with alanine specificity but only little elastolytic activity. The sequence is that of Chymotrypsin-like elastase family member 3B (CELA3B) from Macaca mulatta (Rhesus macaque).